We begin with the raw amino-acid sequence, 184 residues long: SsrA-binding protein (184 aa).

Over residues 1–11 (MAAKKSTPTDS) the composition is skewed to polar residues. The tract at residues 1–31 (MAAKKSTPTDSGKSKGKKNKAQKGAGQKGAG) is disordered.

Belongs to the SmpB family.

It is found in the cytoplasm. Required for rescue of stalled ribosomes mediated by trans-translation. Binds to transfer-messenger RNA (tmRNA), required for stable association of tmRNA with ribosomes. tmRNA and SmpB together mimic tRNA shape, replacing the anticodon stem-loop with SmpB. tmRNA is encoded by the ssrA gene; the 2 termini fold to resemble tRNA(Ala) and it encodes a 'tag peptide', a short internal open reading frame. During trans-translation Ala-aminoacylated tmRNA acts like a tRNA, entering the A-site of stalled ribosomes, displacing the stalled mRNA. The ribosome then switches to translate the ORF on the tmRNA; the nascent peptide is terminated with the 'tag peptide' encoded by the tmRNA and targeted for degradation. The ribosome is freed to recommence translation, which seems to be the essential function of trans-translation. This Corynebacterium jeikeium (strain K411) protein is SsrA-binding protein.